The primary structure comprises 490 residues: Interferon-induced protein with tetratricopeptide repeats 3 (490 aa).

TPR repeat units lie at residues 51–84 (ATMYNLLAYIKHLDGNNEAALECLRQAEELIQQE), 94–127 (LVTWGNYVWVYYHLGRLSDAQIYVDKVKQTCKKF), 136–169 (SELDCEEGWTQLKCGRNERAKVCFEKALEEKPNN), 172–206 (FSSGLAIAMYHLDNNPEKQFSTDVLKQAIELSPDN), 207–240 (QYVKVLLGLKLQKMNKEAEGEQFVEEALEKAPCQ), and 241–274 (TDVLRSAAKFYRRKGDLDKAIELFQRVLESTPNN). Position 203 is a phosphoserine (serine 203). Residues 386–409 (LSISKKSTDKEEIKDQPQNVSENL) are disordered. A compositionally biased stretch (basic and acidic residues) spans 391–400 (KSTDKEEIKD). 2 TPR repeats span residues 415–448 (PNYWYLQGLIHKQNGDLLQAAKCYEKELGRLLRD) and 450–481 (PSGIGSIFLSASELEDGSEEMGQGAVSSSPRE). The interval 467–490 (SEEMGQGAVSSSPRELLSNSEQLN) is disordered. Residues 474-490 (AVSSSPRELLSNSEQLN) are compositionally biased toward polar residues. Residue serine 478 is modified to Phosphoserine.

The protein belongs to the IFIT family. In terms of assembly, component of an interferon-dependent multiprotein complex, at least composed of IFIT1, IFIT2 and IFIT3. Interacts with IFIT1 and IFIT2. Interacts (via N-terminus) with MAVS, TBK1, TRAF6 and RIGI. Interacts with COPS5.

The protein localises to the cytoplasm. Its subcellular location is the mitochondrion. Functionally, IFN-induced antiviral protein which acts as an inhibitor of cellular as well as viral processes, cell migration, proliferation, signaling, and viral replication. Enhances MAVS-mediated host antiviral responses by serving as an adapter bridging TBK1 to MAVS which leads to the activation of TBK1 and phosphorylation of IRF3 and phosphorylated IRF3 translocates into nucleus to promote antiviral gene transcription. Exhibits an antiproliferative activity via the up-regulation of cell cycle negative regulators CDKN1A/p21 and CDKN1B/p27. Normally, CDKN1B/p27 turnover is regulated by COPS5, which binds CDKN1B/p27 in the nucleus and exports it to the cytoplasm for ubiquitin-dependent degradation. IFIT3 sequesters COPS5 in the cytoplasm, thereby increasing nuclear CDKN1B/p27 protein levels. Up-regulates CDKN1A/p21 by down-regulating MYC, a repressor of CDKN1A/p21. Can negatively regulate the apoptotic effects of IFIT2. The polypeptide is Interferon-induced protein with tetratricopeptide repeats 3 (IFIT3) (Pan troglodytes (Chimpanzee)).